Reading from the N-terminus, the 587-residue chain is MTSSIECKNFLRSLQLLNLLIKIGVKNLILCPGSRSAPLAIAAGELNKLGLVNIFNSIDERSAGFHSLGISAASGHLSLVITTSGTAVSNLLPAAVEADRSCKGIIFLTADRPLRLKDCGANQTVNQEDFLSSVCRKVLSTNLNGIHETEENEIFNLVRISEKQMSTFPGPIHLNVPIDKPLDISFLNKKNVLEVFERIYLKKKYVFQEVDIKSDKKKFLEISKNLNLDESGIILVGPYQGSINDLPSFNKSLGQLQEITGWPVFADPVSGVYSDLRGLIVNWELVLRKNKNLINCYQLLRLGPMSSSNDLEKFLINFQGVQILIKEKNHRKLDPIKKSFEYDFGLTNFTSLLKKELSINEKNKKSLTPLALDLLEEGKQVKEILKGNITYENQITEYRLANLVPKLWPAENPIMLSASSPIRDWLTFSENGTLTRNCFSFRGASGIDGTLSLALGISRIKNPLLLVTGDLAFLHDINGWLIENSIDMNLTILLINNNGGNIFNRIYKKNLKEDEFKKLFLMPKEINWPKLAEGYQVNFRSVANFKKLREAFDWSISIEKSAIIKVDIDPQNEICEKNSLLEKIIGS.

It belongs to the TPP enzyme family. MenD subfamily. In terms of assembly, homodimer. Requires Mg(2+) as cofactor. Mn(2+) is required as a cofactor. The cofactor is thiamine diphosphate.

It catalyses the reaction isochorismate + 2-oxoglutarate + H(+) = 5-enolpyruvoyl-6-hydroxy-2-succinyl-cyclohex-3-ene-1-carboxylate + CO2. It functions in the pathway quinol/quinone metabolism; 1,4-dihydroxy-2-naphthoate biosynthesis; 1,4-dihydroxy-2-naphthoate from chorismate: step 2/7. Its pathway is cofactor biosynthesis; phylloquinone biosynthesis. Catalyzes the thiamine diphosphate-dependent decarboxylation of 2-oxoglutarate and the subsequent addition of the resulting succinic semialdehyde-thiamine pyrophosphate anion to isochorismate to yield 2-succinyl-5-enolpyruvyl-6-hydroxy-3-cyclohexene-1-carboxylate (SEPHCHC). The protein is 2-succinyl-5-enolpyruvyl-6-hydroxy-3-cyclohexene-1-carboxylate synthase of Prochlorococcus marinus (strain AS9601).